Here is a 152-residue protein sequence, read N- to C-terminus: MPKRVQIVLNEDILSLGMDGDLVEVAPGYARNFLLPFGKAVPLTPAVMKQVEHRRAKEAERQAALKQEAVDFKTALSTIGRFTVKKQTGEDNVLFGTVTNGDVAEAIETATKKEIDRRDIVVPEIHRTGKYTVTVKLHSEVTAEINLEVVGY.

It belongs to the bacterial ribosomal protein bL9 family.

In terms of biological role, binds to the 23S rRNA. This is Large ribosomal subunit protein bL9 from Synechococcus sp. (strain CC9605).